A 121-amino-acid chain; its full sequence is Small ribosomal subunit protein uS13 (121 aa).

Positions 97–121 (VRGQRTRTNARTRRGARKTVAGRKK) are disordered. Residues 100–121 (QRTRTNARTRRGARKTVAGRKK) are compositionally biased toward basic residues.

Belongs to the universal ribosomal protein uS13 family. In terms of assembly, part of the 30S ribosomal subunit. Forms a loose heterodimer with protein S19. Forms two bridges to the 50S subunit in the 70S ribosome.

Located at the top of the head of the 30S subunit, it contacts several helices of the 16S rRNA. In the 70S ribosome it contacts the 23S rRNA (bridge B1a) and protein L5 of the 50S subunit (bridge B1b), connecting the 2 subunits; these bridges are implicated in subunit movement. Contacts the tRNAs in the A and P-sites. The polypeptide is Small ribosomal subunit protein uS13 (Prochlorococcus marinus (strain NATL1A)).